The following is a 331-amino-acid chain: MKKVIFSGIQPSGQLTLGNYIGALKQFGQFQDEYECFYCIVDEHAITVPQDRLKLREQTRSLAALYLAVGLDPEKATLFIQSEVAAHAQAAWILQCNVYIGELERMTQFKDKSDGKAGVSAGLLTYPPLMAADILLYQTNLVPVGEDQKQHIELTRDLAERFNKKHADIFTMPEVFIPKQGARVMSLQDPTKKMSKSDANLKNAIFLLDPPATIRKKIKSAVTDSSGIIEYNKEEKPGVSNLLTIYSVITGETIANIEEKYVGKGYGDFKTDLAELVVAELEQIQERYYAYLESEELDNILDAGAEKAARVANKTLKKMENGVGLGRKRRK.

ATP is bound by residues 10 to 12 (QPS) and 18 to 19 (GN). Residues 11-19 (PSGQLTLGN) carry the 'HIGH' region motif. Asp-133 is an L-tryptophan binding site. ATP is bound by residues 145–147 (GED), Val-184, and 193–197 (KMSKS). Residues 193–197 (KMSKS) carry the 'KMSKS' region motif.

It belongs to the class-I aminoacyl-tRNA synthetase family. Homodimer.

It localises to the cytoplasm. The enzyme catalyses tRNA(Trp) + L-tryptophan + ATP = L-tryptophyl-tRNA(Trp) + AMP + diphosphate + H(+). Its function is as follows. Catalyzes the attachment of tryptophan to tRNA(Trp). In Listeria innocua serovar 6a (strain ATCC BAA-680 / CLIP 11262), this protein is Tryptophan--tRNA ligase.